An 827-amino-acid chain; its full sequence is 4-hydroxy-3-methylbut-2-enyl diphosphate reductase (827 aa).

Residues 1 to 284 (MEIIRAKHMG…MNIEKKVRGI (284 aa)) are 4-hydroxy-3-methylbut-2-enyl diphosphate reductase. Cys-12 contacts [4Fe-4S] cluster. (2E)-4-hydroxy-3-methylbut-2-enyl diphosphate-binding residues include His-40 and His-79. His-40 and His-79 together coordinate dimethylallyl diphosphate. Isopentenyl diphosphate contacts are provided by His-40 and His-79. Cys-101 is a [4Fe-4S] cluster binding site. Residue His-129 participates in (2E)-4-hydroxy-3-methylbut-2-enyl diphosphate binding. His-129 provides a ligand contact to dimethylallyl diphosphate. His-129 is an isopentenyl diphosphate binding site. Glu-131 (proton donor) is an active-site residue. Thr-168 is a (2E)-4-hydroxy-3-methylbut-2-enyl diphosphate binding site. Cys-196 lines the [4Fe-4S] cluster pocket. (2E)-4-hydroxy-3-methylbut-2-enyl diphosphate contacts are provided by Ser-224, Ser-225, Asn-226, and Ser-268. The dimethylallyl diphosphate site is built by Ser-224, Ser-225, Asn-226, and Ser-268. 4 residues coordinate isopentenyl diphosphate: Ser-224, Ser-225, Asn-226, and Ser-268. S1 motif domains are found at residues 477–545 (GQIV…LSIK), 562–632 (DDEI…LGIK), 649–716 (DTVI…GSLK), and 733–802 (GTTV…LSIK).

The protein in the N-terminal section; belongs to the IspH family. The cofactor is [4Fe-4S] cluster.

It carries out the reaction isopentenyl diphosphate + 2 oxidized [2Fe-2S]-[ferredoxin] + H2O = (2E)-4-hydroxy-3-methylbut-2-enyl diphosphate + 2 reduced [2Fe-2S]-[ferredoxin] + 2 H(+). It catalyses the reaction dimethylallyl diphosphate + 2 oxidized [2Fe-2S]-[ferredoxin] + H2O = (2E)-4-hydroxy-3-methylbut-2-enyl diphosphate + 2 reduced [2Fe-2S]-[ferredoxin] + 2 H(+). Its pathway is isoprenoid biosynthesis; dimethylallyl diphosphate biosynthesis; dimethylallyl diphosphate from (2E)-4-hydroxy-3-methylbutenyl diphosphate: step 1/1. It participates in isoprenoid biosynthesis; isopentenyl diphosphate biosynthesis via DXP pathway; isopentenyl diphosphate from 1-deoxy-D-xylulose 5-phosphate: step 6/6. Functionally, catalyzes the conversion of 1-hydroxy-2-methyl-2-(E)-butenyl 4-diphosphate (HMBPP) into a mixture of isopentenyl diphosphate (IPP) and dimethylallyl diphosphate (DMAPP). Acts in the terminal step of the DOXP/MEP pathway for isoprenoid precursor biosynthesis. The polypeptide is 4-hydroxy-3-methylbut-2-enyl diphosphate reductase (Fusobacterium nucleatum subsp. nucleatum (strain ATCC 25586 / DSM 15643 / BCRC 10681 / CIP 101130 / JCM 8532 / KCTC 2640 / LMG 13131 / VPI 4355)).